The sequence spans 993 residues: uncharacterized protein (993 aa).

The signal sequence occupies residues 1 to 28 (MKLFPRSILITLVLSFALNLGIVTKIHA). 7 helical membrane-spanning segments follow: residues 331 to 351 (IVTA…LLAG), 359 to 379 (YINF…INIT), 392 to 412 (MIQW…SWVM), 494 to 514 (MLVS…AFMV), 521 to 541 (MISI…FLFA), 554 to 574 (MISF…MFSV), and 699 to 719 (IKNI…MYNF). The disordered stretch occupies residues 779-904 (GQGGGASDLE…EKVDSTSKGT (126 aa)). The span at 805–829 (TSAPAVTTPTASSSVASSSPKTVSS) shows a compositional bias: low complexity. A compositionally biased stretch (pro residues) spans 838-850 (PPAPTEAVSPPPA). A compositionally biased stretch (basic and acidic residues) spans 866–879 (IIRDNNQESKKEID).

Belongs to the TrbL/VirB6 family.

It is found in the cell membrane. This is an uncharacterized protein from Rickettsia conorii (strain ATCC VR-613 / Malish 7).